Reading from the N-terminus, the 307-residue chain is MTTSTTGVVVQGTGGVWEVYTEQGERFSASMRGRLKHEAHGALKLAVGDRVTIARDAQHAETWAITDIHPRTSKLARRMPGGRYGERIVVANLDQVLVVFAAARPDPHPRMLDRFLVIAEANGLSARIVINKADLVSPEVSAALFADQMAAGYPVHHTSIHTGEGLEALRDEVEHRSSALSGPSGVGKSSLMNALFPGLDLRTAAVSDAVNKGRHTTVGAMLHPLPHGGFIADTPGLREVGLWGIEAGQVASCFPEFRPLLSACRFADCIHTVEPGCAVREAVEAGDVSPGRYESYVKLRDELMGRS.

Residues 82-240 (GRYGERIVVA…IADTPGLREV (159 aa)) form the CP-type G domain. GTP contacts are provided by residues 131 to 134 (NKAD) and 182 to 190 (GPSGVGKSS). Residues C264, C269, H271, and C277 each coordinate Zn(2+).

This sequence belongs to the TRAFAC class YlqF/YawG GTPase family. RsgA subfamily. As to quaternary structure, monomer. Associates with 30S ribosomal subunit, binds 16S rRNA. Requires Zn(2+) as cofactor.

It localises to the cytoplasm. Its function is as follows. One of several proteins that assist in the late maturation steps of the functional core of the 30S ribosomal subunit. Helps release RbfA from mature subunits. May play a role in the assembly of ribosomal proteins into the subunit. Circularly permuted GTPase that catalyzes slow GTP hydrolysis, GTPase activity is stimulated by the 30S ribosomal subunit. The chain is Small ribosomal subunit biogenesis GTPase RsgA from Gemmatimonas aurantiaca (strain DSM 14586 / JCM 11422 / NBRC 100505 / T-27).